A 259-amino-acid chain; its full sequence is MSGQENHDHGRISSTPAAASEPSKAAAHSSDYAPYPKLDPTDVTPPPPQPIPTGAAATTMPAESNPYVSPSPAPRNTMDSVKDTLGKWGKMAADATKKAEDLAGNFWQHLKTGPSVADAAVSRIAQGTKILAEGGYEKVFKQTFDCLPDEKLLKTYACYLSTSAGPVLGVMYLSTHKLAFSSDNPLSYKEGEQTLWSYYKVVLPANQLKAVNPSTSRVNTSDKYIQVISIDNHEFWFMGFVTYESAVKSLQEAVQSHGP.

A compositionally biased stretch (basic and acidic residues) spans 1–11 (MSGQENHDHGR). The tract at residues 1–79 (MSGQENHDHG…PSPAPRNTMD (79 aa)) is disordered. Positions 13 to 30 (SSTPAAASEPSKAAAHSS) are enriched in low complexity. Residues 138–215 (KVFKQTFDCL…NQLKAVNPST (78 aa)) form the GRAM domain.

It belongs to the GEM family. As to quaternary structure, interacts with AFH1.

This Arabidopsis thaliana (Mouse-ear cress) protein is GEM-like protein 1 (FIP1).